A 135-amino-acid polypeptide reads, in one-letter code: Probable histone H2A.7 (135 aa).

It belongs to the histone H2A family. As to quaternary structure, the nucleosome is a histone octamer containing two molecules each of H2A, H2B, H3 and H4 assembled in one H3-H4 heterotetramer and two H2A-H2B heterodimers. The octamer wraps approximately 147 bp of DNA.

Its subcellular location is the nucleus. It localises to the chromosome. Functionally, core component of nucleosome. Nucleosomes wrap and compact DNA into chromatin, limiting DNA accessibility to the cellular machineries which require DNA as a template. Histones thereby play a central role in transcription regulation, DNA repair, DNA replication and chromosomal stability. DNA accessibility is regulated via a complex set of post-translational modifications of histones, also called histone code, and nucleosome remodeling. The chain is Probable histone H2A.7 from Oryza sativa subsp. indica (Rice).